A 458-amino-acid chain; its full sequence is Monomethylamine methyltransferase MtmB2 (458 aa).

Pyrrolysine 202 is a non-standard amino acid (pyrrolysine).

This sequence belongs to the monomethylamine methyltransferase family. In terms of assembly, can form a complex with MtmC.

It catalyses the reaction Co(I)-[methylamine-specific corrinoid protein] + methylamine + H(+) = methyl-Co(III)-[methylamine-specific corrinoid protein] + NH4(+). It participates in one-carbon metabolism; methanogenesis from methylamine. Functionally, catalyzes the transfer of the methyl group from monomethylamine to the corrinoid cofactor of MtmC. The sequence is that of Monomethylamine methyltransferase MtmB2 (mtmB2) from Methanosarcina acetivorans (strain ATCC 35395 / DSM 2834 / JCM 12185 / C2A).